Consider the following 440-residue polypeptide: MSALIIFGLLIALMLTGMPISISLGLTVLTFLFTMTQVPIDTVALKLFTGIEKFEIMAIPFFILAGNFLTHGGVAKRMINFATAMVGHWHGGLGLAGVIACALFAAVSGSSPATVVAIGSVILPAMVNQGFPKQFGAGVITTSGALGILIPPSIVMVMYAVATSGMVVTGPDGQPVSSASVGELFMAGVVPGLMLAGFLAFTTWNRARKFGYPRLEKASLRQRWTAFREAAWGLMLIVVVIGGIYAGIFTPTEAAAMSAVYAFFISVFVYKDLTLRDVPRVLLSSANMSAMLLYIITNAVLFSFLMAHEGIPQALGEWMVNAGLSWWMFLIIVNILLLAAGNFMEPSSIVLIMAPILFPVAVRLGIDPVHFGIMIVVNMEVGMCHPPVGLNLYVASGITKMGITELTVAVWPWLLTMLAFLVLVTYVPAISLALPNLLGM.

Helical transmembrane passes span Leu4–Leu24, Phe54–Val74, Trp89–Gly109, Pro112–Pro132, Ile148–Val168, Val181–Phe201, Ala230–Thr250, Ala255–Leu275, Met291–Ile311, Trp318–Leu338, Ile349–Val369, His370–Leu390, and Val410–Ile430.

It belongs to the TRAP transporter large permease family. In terms of assembly, the complex comprises the extracytoplasmic solute receptor protein DctP, and the two transmembrane proteins DctQ and DctM.

The protein resides in the cell inner membrane. Its function is as follows. Part of the tripartite ATP-independent periplasmic (TRAP) transport system DctPQM involved in C4-dicarboxylates uptake. This is C4-dicarboxylate TRAP transporter large permease protein DctM from Rhodobacter capsulatus (Rhodopseudomonas capsulata).